The sequence spans 252 residues: Type III pantothenate kinase (252 aa).

ATP is bound at residue Asp-6–Val-13. Position 107 to 110 (Gly-107 to Leu-110) interacts with substrate. Residue Asp-109 is the Proton acceptor of the active site. Asp-129 contributes to the K(+) binding site. Thr-132 provides a ligand contact to ATP. Thr-184 is a binding site for substrate.

This sequence belongs to the type III pantothenate kinase family. Homodimer. The cofactor is NH4(+). K(+) serves as cofactor.

The protein localises to the cytoplasm. The catalysed reaction is (R)-pantothenate + ATP = (R)-4'-phosphopantothenate + ADP + H(+). It functions in the pathway cofactor biosynthesis; coenzyme A biosynthesis; CoA from (R)-pantothenate: step 1/5. In terms of biological role, catalyzes the phosphorylation of pantothenate (Pan), the first step in CoA biosynthesis. The protein is Type III pantothenate kinase of Bifidobacterium animalis subsp. lactis (strain AD011).